The primary structure comprises 447 residues: Putative vacuolar cation/proton exchanger 4 (447 aa).

The tract at residues 1–29 (MDKSEMDKINGTNPESTDQAPSLASRPDE) is disordered. Over 1–65 (MDKSEMDKIN…VNWGVFGSMK (65 aa)) the chain is Cytoplasmic. A compositionally biased stretch (polar residues) spans 10-22 (NGTNPESTDQAPS). A helical membrane pass occupies residues 66-86 (IVFLKSKLNVLIPCGFLAIFL). The Extracellular portion of the chain corresponds to 87–93 (NYMTQRY). The chain crosses the membrane as a helical span at residues 94–114 (GWVFPLSMLGIIPLAERLGFA). The Cytoplasmic portion of the chain corresponds to 115–122 (TDWQISCE). A helical transmembrane segment spans residues 123 to 143 (VGRLLNSAFGNATELIISIHA). The tract at residues 132 to 167 (GNATELIISIHALSRGKLHVVQQCLLGSILSNLLLV) is cation selection. At 144–159 (LSRGKLHVVQQCLLGS) the chain is on the extracellular side. Residues 160-180 (ILSNLLLVLGSAFFSGGLACG) form a helical membrane-spanning segment. Over 181-190 (KTMQTFSKAD) the chain is Cytoplasmic. A helical transmembrane segment spans residues 191–211 (AVVNSGLLLMAVMGLLIPAAL). Residues 212 to 224 (HYTHSEAQFGKSE) lie on the Extracellular side of the membrane. Residues 225 to 245 (LALSRFSSCIMLVAYASYLYF) traverse the membrane as a helical segment. Over 246–286 (QLSNNRRRNEANVYPCMPLIKRRIQDDVDGNDDEVPEISKR) the chain is Cytoplasmic. The helical transmembrane segment at 287–307 (EAISWIAIFIAWISMLSYYLV) threads the bilayer. Residues 308–318 (DAIDGASKAWN) are Extracellular-facing. Residues 319 to 339 (IPVAFISVVLLPVVGNSAGHA) form a helical membrane-spanning segment. Residues 333–368 (GNSAGHANAVMFAVKDKLDISLGVAIGSSIQISMFG) are cation selection. At 340 to 353 (NAVMFAVKDKLDIS) the chain is on the cytoplasmic side. The chain crosses the membrane as a helical span at residues 354-374 (LGVAIGSSIQISMFGIPFCVV). Topologically, residues 375 to 384 (MGWMMGKPMD) are extracellular. The helical transmembrane segment at 385–405 (LNFHLFETASLLTTVLVVAFL) threads the bilayer. The Cytoplasmic portion of the chain corresponds to 406-413 (LQDGTSNC). The helical transmembrane segment at 414-434 (VKGLMLFLCYLIVAASFYVHA) threads the bilayer. Residues 435-447 (DPNSKASEKPPQN) are Extracellular-facing.

Belongs to the Ca(2+):cation antiporter (CaCA) (TC 2.A.19) family. Cation/proton exchanger (CAX) subfamily.

Its subcellular location is the vacuole membrane. Functionally, vacuolar cation/proton exchanger (CAX). Translocates Ca(2+) and other metal ions into vacuoles using the proton gradient formed by H(+)-ATPase and H(+)-pyrophosphatase. This Oryza sativa subsp. japonica (Rice) protein is Putative vacuolar cation/proton exchanger 4.